The following is a 252-amino-acid chain: 3-dehydroquinate dehydratase (252 aa).

3-dehydroquinate is bound by residues Ser-21, 46-48, and Arg-82; that span reads EWR. The active-site Proton donor/acceptor is His-143. Residue Lys-170 is the Schiff-base intermediate with substrate of the active site. 3-dehydroquinate contacts are provided by Arg-213, Ser-232, and Gln-236.

It belongs to the type-I 3-dehydroquinase family. As to quaternary structure, homodimer.

The catalysed reaction is 3-dehydroquinate = 3-dehydroshikimate + H2O. The protein operates within metabolic intermediate biosynthesis; chorismate biosynthesis; chorismate from D-erythrose 4-phosphate and phosphoenolpyruvate: step 3/7. In terms of biological role, involved in the third step of the chorismate pathway, which leads to the biosynthesis of aromatic amino acids. Catalyzes the cis-dehydration of 3-dehydroquinate (DHQ) and introduces the first double bond of the aromatic ring to yield 3-dehydroshikimate. This Salmonella agona (strain SL483) protein is 3-dehydroquinate dehydratase.